The primary structure comprises 364 residues: MRIVVSGGGTGGHIYPALAMIREIERRTPCEVLYIGTENGLEADIVRRAGIPFESIEISGIRRSLSFENVKTGFRFLKSVVRVRKLLRDFQPDIVVGTGGFVCGPVLYTAAKMGYKTLVHEQNSLPGITNKFLARYVDRVALSFKGSGHHFGKNKGKTILIGNPRASEVAMLQIDPVEEKRKYGFEQDRPLIVVYGGSRGAPAINKAVVDMIPKLTETDWSLLFVTGQVHYEDIQAQLGTLPDRIQLRPFIYDLPLILKASQLVISRSGASTLAELTTLGLPSILIPSPYVTENHQEVNASSLVETGASLLIRESELTGDRLFDACTKAIADQADMSKASLALGMPNAASDLVDELLRLIQRKN.

UDP-N-acetyl-alpha-D-glucosamine contacts are provided by residues 10–12 (TGG), Asn-123, Ser-198, Ile-251, and Gln-296.

It belongs to the glycosyltransferase 28 family. MurG subfamily.

The protein localises to the cell membrane. The catalysed reaction is di-trans,octa-cis-undecaprenyl diphospho-N-acetyl-alpha-D-muramoyl-L-alanyl-D-glutamyl-meso-2,6-diaminopimeloyl-D-alanyl-D-alanine + UDP-N-acetyl-alpha-D-glucosamine = di-trans,octa-cis-undecaprenyl diphospho-[N-acetyl-alpha-D-glucosaminyl-(1-&gt;4)]-N-acetyl-alpha-D-muramoyl-L-alanyl-D-glutamyl-meso-2,6-diaminopimeloyl-D-alanyl-D-alanine + UDP + H(+). The protein operates within cell wall biogenesis; peptidoglycan biosynthesis. Cell wall formation. Catalyzes the transfer of a GlcNAc subunit on undecaprenyl-pyrophosphoryl-MurNAc-pentapeptide (lipid intermediate I) to form undecaprenyl-pyrophosphoryl-MurNAc-(pentapeptide)GlcNAc (lipid intermediate II). The sequence is that of UDP-N-acetylglucosamine--N-acetylmuramyl-(pentapeptide) pyrophosphoryl-undecaprenol N-acetylglucosamine transferase from Exiguobacterium sibiricum (strain DSM 17290 / CCUG 55495 / CIP 109462 / JCM 13490 / 255-15).